The primary structure comprises 182 residues: MSVLDENQKQFLLDSIRNIPDFPKPGIQFKDITTLLNDPKAFGFLIDFLTDRYARFELDYVAGIESRGFIFGAALAAKLEVGFVPIRKKGKLPSTTIAEKYSLEYGFDEVEIHIDAFREKEGSRVLLIDDLIATGGTAEAAVKLIQSAKGHCVEACFLLNLEELGGAKKVSNLAPLYTLLDI.

Belongs to the purine/pyrimidine phosphoribosyltransferase family. Homodimer.

It localises to the cytoplasm. It carries out the reaction AMP + diphosphate = 5-phospho-alpha-D-ribose 1-diphosphate + adenine. Its pathway is purine metabolism; AMP biosynthesis via salvage pathway; AMP from adenine: step 1/1. In terms of biological role, catalyzes a salvage reaction resulting in the formation of AMP, that is energically less costly than de novo synthesis. The chain is Adenine phosphoribosyltransferase from Wolinella succinogenes (strain ATCC 29543 / DSM 1740 / CCUG 13145 / JCM 31913 / LMG 7466 / NCTC 11488 / FDC 602W) (Vibrio succinogenes).